The sequence spans 296 residues: MANELPEIANPTRTRAIMETYGLTFKKSLGQNFLTDINILKNIVAAAEVSEEDNVIEIGPGIGALTEQLAKRANKVMALEIDDRLLPVLADTLSPYENVEVVHQDILKADLKALIAEHFEPGHKLKLVANLPYYITTPILMHLLDSGIEFETIVVMMQKEVAERLAANPGTKAYGSLSVAVQYEMDSEIAFIVPKTVFVPQPNVDSAIIVLNKKKVKPKEPQDEKHFKKLVKGSFMHRRKSLWNNLQSLYGKDPETKEKMLQALEVADIKQSIRAEKLTVADFINLSDALVKMGIN.

Asn32, Leu34, Gly59, Glu80, Asp105, and Asn130 together coordinate S-adenosyl-L-methionine.

It belongs to the class I-like SAM-binding methyltransferase superfamily. rRNA adenine N(6)-methyltransferase family. RsmA subfamily.

Its subcellular location is the cytoplasm. It carries out the reaction adenosine(1518)/adenosine(1519) in 16S rRNA + 4 S-adenosyl-L-methionine = N(6)-dimethyladenosine(1518)/N(6)-dimethyladenosine(1519) in 16S rRNA + 4 S-adenosyl-L-homocysteine + 4 H(+). In terms of biological role, specifically dimethylates two adjacent adenosines (A1518 and A1519) in the loop of a conserved hairpin near the 3'-end of 16S rRNA in the 30S particle. May play a critical role in biogenesis of 30S subunits. In Ligilactobacillus salivarius (strain UCC118) (Lactobacillus salivarius), this protein is Ribosomal RNA small subunit methyltransferase A.